The sequence spans 393 residues: Putative bacilysin exporter BacE (393 aa).

10 helical membrane passes run 11–31, 43–63, 69–89, 92–112, 133–155, 160–177, 215–235, 244–264, 287–307, and 353–373; these read LLFGQALSFMGDYCVLPALLI, SGVIAVRSIPMVFQPFLGVLV, VKIMLWTDVIRGVIFLGLTFL, GEYPLLFLALLFVSYGSGVFF, LFAKATTISIIVGAAAGGLFLLG, LAVAFNGVTYLVSAFFIS, MFTMITMALLWGVVYSYFPIV, IGNFLLTFCIGFGGFIGAALV, ALFLFTPIFAVSVIAAILFFI, and IVDAAVIMAFIVLLVSGLFLH.

It belongs to the major facilitator superfamily.

The protein resides in the cell membrane. Its function is as follows. Part of the bacilysin biosynthesis operon. May be involved in self-resistance to bacilysin by permitting efflux of this antibiotic. This is Putative bacilysin exporter BacE (bacE) from Bacillus amyloliquefaciens (Bacillus velezensis).